Reading from the N-terminus, the 188-residue chain is Cell division protein SepF (188 aa).

Residues Glu-29 to Pro-53 form a disordered region.

Belongs to the SepF family. Homodimer. Interacts with FtsZ.

Its subcellular location is the cytoplasm. Its function is as follows. Cell division protein that is part of the divisome complex and is recruited early to the Z-ring. Probably stimulates Z-ring formation, perhaps through the cross-linking of FtsZ protofilaments. Its function overlaps with FtsA. This Synechococcus sp. (strain CC9902) protein is Cell division protein SepF.